The chain runs to 120 residues: NAD(P)H-quinone oxidoreductase subunit 3, chloroplastic (120 aa).

A run of 3 helical transmembrane segments spans residues Phe10 to Val30, Met64 to Met84, and Val88 to Leu108.

Belongs to the complex I subunit 3 family. As to quaternary structure, NDH is composed of at least 16 different subunits, 5 of which are encoded in the nucleus.

It localises to the plastid. Its subcellular location is the chloroplast thylakoid membrane. The catalysed reaction is a plastoquinone + NADH + (n+1) H(+)(in) = a plastoquinol + NAD(+) + n H(+)(out). It carries out the reaction a plastoquinone + NADPH + (n+1) H(+)(in) = a plastoquinol + NADP(+) + n H(+)(out). NDH shuttles electrons from NAD(P)H:plastoquinone, via FMN and iron-sulfur (Fe-S) centers, to quinones in the photosynthetic chain and possibly in a chloroplast respiratory chain. The immediate electron acceptor for the enzyme in this species is believed to be plastoquinone. Couples the redox reaction to proton translocation, and thus conserves the redox energy in a proton gradient. This is NAD(P)H-quinone oxidoreductase subunit 3, chloroplastic from Ipomoea purpurea (Common morning glory).